Reading from the N-terminus, the 156-residue chain is SsrA-binding protein (156 aa).

It belongs to the SmpB family.

The protein localises to the cytoplasm. In terms of biological role, required for rescue of stalled ribosomes mediated by trans-translation. Binds to transfer-messenger RNA (tmRNA), required for stable association of tmRNA with ribosomes. tmRNA and SmpB together mimic tRNA shape, replacing the anticodon stem-loop with SmpB. tmRNA is encoded by the ssrA gene; the 2 termini fold to resemble tRNA(Ala) and it encodes a 'tag peptide', a short internal open reading frame. During trans-translation Ala-aminoacylated tmRNA acts like a tRNA, entering the A-site of stalled ribosomes, displacing the stalled mRNA. The ribosome then switches to translate the ORF on the tmRNA; the nascent peptide is terminated with the 'tag peptide' encoded by the tmRNA and targeted for degradation. The ribosome is freed to recommence translation, which seems to be the essential function of trans-translation. This is SsrA-binding protein from Maricaulis maris (strain MCS10) (Caulobacter maris).